A 335-amino-acid chain; its full sequence is Phosphatidylinositol:ceramide inositolphosphotransferase (335 aa).

Residues 1-21 (MVLMGPHSALRLLPLKTQAIR) are Cytoplasmic-facing. Residues 22–42 (FVLLLLLSVLILAVALLVTNA) form a helical membrane-spanning segment. The Extracellular portion of the chain corresponds to 43 to 72 (RMPDPKVVRPLPDIGFEVFPKVGWLEHLTD). Residues 73-93 (VCIFILNFLSLLVVFKLYLLH) traverse the membrane as a helical segment. Over 94 to 98 (RQNEG) the chain is Cytoplasmic. Residues 99–119 (LDELQPFSCCPLIGKIIFGVW) traverse the membrane as a helical segment. Topologically, residues 120-139 (DSGRQSGIEKRDAHLIAWIR) are extracellular. The chain crosses the membrane as a helical span at residues 140–160 (YFTTYFIVLLFRAIVVVMTSY). Residues 161-179 (PATDNHCQNPMKITNPVKN) lie on the Cytoplasmic side of the membrane. Residues 180–200 (VIMTLVTFGSGSIHCGDLMFS) traverse the membrane as a helical segment. Residues 201 to 203 (GHT) lie on the Extracellular side of the membrane. His-202 is an active-site residue. A helical transmembrane segment spans residues 204-224 (VSITLSLLVQWIYGSMLHWVF). Residues 225 to 335 (RPASVLLVLL…GPACGNFGHW (111 aa)) lie on the Cytoplasmic side of the membrane. Residues His-245 and Asp-249 contribute to the active site.

It belongs to the sphingomyelin synthase family.

Its subcellular location is the membrane. Bidirectional lipid inositolphosphotransferase capable of converting phosphatidylinositol (PI) and ceramide to inositol-phosphorylceramide (IPC) and diacylglycerol (DAG) and vice versa. Direction is dependent on the relative concentrations of DAG and ceramide as phosphoinositol acceptors. Essential for viability of the pathogenic bloodstream stage of this human protozoan parasite and, consequently, can be considered as potential drug target. The protein is Phosphatidylinositol:ceramide inositolphosphotransferase of Trypanosoma cruzi (strain CL Brener).